The sequence spans 426 residues: Glutamate-1-semialdehyde 2,1-aminomutase (426 aa).

K265 carries the N6-(pyridoxal phosphate)lysine modification.

Belongs to the class-III pyridoxal-phosphate-dependent aminotransferase family. HemL subfamily. Homodimer. Pyridoxal 5'-phosphate is required as a cofactor.

Its subcellular location is the cytoplasm. The enzyme catalyses (S)-4-amino-5-oxopentanoate = 5-aminolevulinate. It functions in the pathway porphyrin-containing compound metabolism; protoporphyrin-IX biosynthesis; 5-aminolevulinate from L-glutamyl-tRNA(Glu): step 2/2. The sequence is that of Glutamate-1-semialdehyde 2,1-aminomutase from Salmonella agona (strain SL483).